Here is a 482-residue protein sequence, read N- to C-terminus: Anaerobic nitric oxide reductase flavorubredoxin (482 aa).

The tract at residues 30–210 is zinc metallo-hydrolase; the sequence is LRGSSYNSYL…PFSRLVTPKI (181 aa). Fe cation is bound by residues His-79, Glu-81, Asp-83, His-147, Asp-166, and His-227. The Flavodoxin-like domain occupies 254-393; it reads ITIFYDTMSN…LCRQHGRDIA (140 aa). Residues 260–264 and 342–369 contribute to the FMN site; these read TMSNN and AFGSHGWSGGAVDRLSTRLQDAGFEMSL. The Rubredoxin-like domain maps to 426–477; it reads GPMMQCSVCQWVYDPAKGEPNQDVQPGTPWSEVPDNFLCPECSLGKDVFDVL. Cys-431, Cys-434, Cys-464, and Cys-467 together coordinate Fe cation.

In the N-terminal section; belongs to the zinc metallo-hydrolase group 3 family. In terms of assembly, homotetramer. Fe cation serves as cofactor. It depends on FMN as a cofactor.

The protein resides in the cytoplasm. Its pathway is nitrogen metabolism; nitric oxide reduction. Its function is as follows. Anaerobic nitric oxide reductase; uses NADH to detoxify nitric oxide (NO), protecting several 4Fe-4S NO-sensitive enzymes. Has at least 2 reductase partners, only one of which (NorW, flavorubredoxin reductase) has been identified. NO probably binds to the di-iron center; electrons enter from the NorW at rubredoxin and are transferred sequentially to the FMN center and the di-iron center. Also able to function as an aerobic oxygen reductase. This Klebsiella pneumoniae subsp. pneumoniae (strain ATCC 700721 / MGH 78578) protein is Anaerobic nitric oxide reductase flavorubredoxin.